We begin with the raw amino-acid sequence, 208 residues long: Dephospho-CoA kinase (208 aa).

The 197-residue stretch at 5 to 201 folds into the DPCK domain; sequence IVALTGGIGS…QRYLALAASA (197 aa). 13-18 is an ATP binding site; it reads GSGKST.

This sequence belongs to the CoaE family.

Its subcellular location is the cytoplasm. The enzyme catalyses 3'-dephospho-CoA + ATP = ADP + CoA + H(+). It functions in the pathway cofactor biosynthesis; coenzyme A biosynthesis; CoA from (R)-pantothenate: step 5/5. Catalyzes the phosphorylation of the 3'-hydroxyl group of dephosphocoenzyme A to form coenzyme A. The protein is Dephospho-CoA kinase of Sodalis glossinidius (strain morsitans).